We begin with the raw amino-acid sequence, 282 residues long: Putative SWIB domain-containing protein 070L (282 aa).

Low complexity predominate over residues 1 to 16 (MFQTTPKQVKPTTVPK). The segment at 1 to 21 (MFQTTPKQVKPTTVPKTGRKN) is disordered. The 85-residue stretch at 97 to 181 (GLEKPRMISE…QKYLKHCFDE (85 aa)) folds into the SWIB/MDM2 domain. The disordered stretch occupies residues 199–282 (TDDQTTAEEA…KVKKEHKIKK (84 aa)). Positions 262–275 (GKKDKENIPLEKVK) are enriched in basic and acidic residues.

It belongs to the IIV-6 306R family.

This is Putative SWIB domain-containing protein 070L from Invertebrate iridescent virus 3 (IIV-3).